The primary structure comprises 316 residues: Probable cell division protein WhiA (316 aa).

Positions 275 to 309 (TLKELGEMVSGGKISKSGINHRLRKIDEIAEKLRA) form a DNA-binding region, H-T-H motif.

Belongs to the WhiA family.

Involved in cell division and chromosome segregation. In Bacillus cereus (strain B4264), this protein is Probable cell division protein WhiA.